The following is a 154-amino-acid chain: 17.6 kDa class I heat shock protein (154 aa).

The sHSP domain maps to 40 to 154; it reads ENSAFVNTRV…SDVKPIEISG (115 aa).

Belongs to the small heat shock protein (HSP20) family. In terms of assembly, forms oligomeric structures.

It localises to the cytoplasm. The protein is 17.6 kDa class I heat shock protein (HSP17.6-L) of Glycine max (Soybean).